A 499-amino-acid chain; its full sequence is Alpha-internexin (499 aa).

The head stretch occupies residues 1–87 (MSFGSEHYLC…SQAAARTNEY (87 aa)). At Ser-72 the chain carries Phosphoserine. The coil 1A stretch occupies residues 88-129 (KIIRTNEKEQLQGLNDRFAVFIEKVHQLETQNRALEAELAAL). The region spanning 94 to 407 (EKEQLQGLND…KLLEGEETRF (314 aa)) is the IF rod domain. The segment at 130-142 (RQRHAEPSRVGEL) is linker 1. Residues 143–238 (FQRELRDLRA…QVHDEEVAEL (96 aa)) are coil 1B. Ser-219 is subject to Phosphoserine. The tract at residues 239 to 262 (LATLQASSQAAAEVDVTVAKPDLT) is linker 2. A coil 2 region spans residues 263–408 (SALREIRAQY…LLEGEETRFS (146 aa)). An N6-acetyllysine modification is found at Lys-290. Ser-335 is modified (phosphoserine). The tract at residues 409–499 (TSGLSISGLN…EETTISSQKI (91 aa)) is tail. The disordered stretch occupies residues 441–466 (STGLSLKKEEEEEEASKVASKKTSQI). A phosphoserine mark is found at Ser-469 and Ser-496.

This sequence belongs to the intermediate filament family. In terms of assembly, forms homodimers (in vitro). Forms heterodimers with NEFL, NEFM or NEFH (in vitro). In terms of processing, O-glycosylated. In terms of tissue distribution, found predominantly in adult CNS.

Functionally, class-IV neuronal intermediate filament that is able to self-assemble. It is involved in the morphogenesis of neurons. It may form an independent structural network without the involvement of other neurofilaments or it may cooperate with NEFL to form the filamentous backbone to which NEFM and NEFH attach to form the cross-bridges. May also cooperate with the neuronal intermediate filament protein PRPH to form filamentous networks. In Homo sapiens (Human), this protein is Alpha-internexin (INA).